A 475-amino-acid polypeptide reads, in one-letter code: F-box protein SKIP22 (475 aa).

Residues 114 to 133 are disordered; the sequence is DQAKSNPNTSVEDPEGDISG. Positions 319–365 constitute an F-box domain; it reads PPCLMRLPTELKLKILELLPGVSIGNMACVCTEMRYLASDNDLWKQK.

In terms of assembly, part of a SCF (ASK-cullin-F-box) protein ligase complex. Interacts with SKP1A/ASK1 and SPK1B/ASK2.

It is found in the nucleus. It participates in protein modification; protein ubiquitination. Its function is as follows. Component of SCF(ASK-cullin-F-box) E3 ubiquitin ligase complexes, which may mediate the ubiquitination and subsequent proteasomal degradation of target proteins. This Arabidopsis thaliana (Mouse-ear cress) protein is F-box protein SKIP22 (SKIP22).